The sequence spans 1003 residues: Cation-transporting ATPase HMA5 (1003 aa).

The segment at 6–25 (LSAVAGGGRPAAAGGGGDEM) is disordered. Positions 10-22 (AGGGRPAAAGGGG) are enriched in gly residues. HMA domains are found at residues 51 to 117 (EEAH…FDAE), 133 to 199 (LSAQ…FEAA), and 207 to 273 (DKIL…NGRL). Cu cation-binding residues include C62, C65, C144, and C147. 8 consecutive transmembrane segments (helical) span residues 302 to 322 (SLFLSIPVFFIRMVCPHIPFI), 331 to 351 (GPFHMGDLLKWILVSIVQFVV), 372 to 392 (VLVVLGTTASYVYSVCALLYG), 396 to 416 (GFHPPIYFETSAMIITFVLFG), 562 to 582 (IFVPIVITLSMITFLVWFLCG), 599 to 619 (FVFSLMFAIAVVVIACPCALG), 938 to 958 (FFAMAYNVVAIPVAAGALFPF), and 966 to 986 (WLAGACMAFSSVSVVCSSLLL).

This sequence belongs to the cation transport ATPase (P-type) (TC 3.A.3) family. Type IB subfamily. As to expression, expressed in root vascular cylinder, vascular bundles and mesophyll cells of leaf blades, and anther walls and microspores of stamens.

Its subcellular location is the cell membrane. Functionally, metal efflux transporter that may play a role in detoxification of heavy metals, such as zinc, copper, lead and cadmium, especially in the shoots. The sequence is that of Cation-transporting ATPase HMA5 from Oryza sativa subsp. japonica (Rice).